The following is a 201-amino-acid chain: Small ribosomal subunit protein uS4 (201 aa).

The S4 RNA-binding domain maps to 91–151; that stretch reads SRLDNVVYRA…EKSQKMIWFE (61 aa).

The protein belongs to the universal ribosomal protein uS4 family. In terms of assembly, part of the 30S ribosomal subunit. Contacts protein S5. The interaction surface between S4 and S5 is involved in control of translational fidelity.

One of the primary rRNA binding proteins, it binds directly to 16S rRNA where it nucleates assembly of the body of the 30S subunit. Its function is as follows. With S5 and S12 plays an important role in translational accuracy. The chain is Small ribosomal subunit protein uS4 from Corynebacterium diphtheriae (strain ATCC 700971 / NCTC 13129 / Biotype gravis).